The primary structure comprises 258 residues: Snake venom serine protease KN12 (258 aa).

The N-terminal stretch at 1-18 is a signal peptide; the sequence is MVLIRVLANLLILQLSYA. A propeptide spanning residues 19 to 24 is cleaved from the precursor; sequence QRSSEL. One can recognise a Peptidase S1 domain in the interval 25–249; the sequence is VIGGDECNIN…HLDWIQNIIA (225 aa). Intrachain disulfides connect C31-C163, C50-C66, C98-C256, C142-C210, C174-C189, and C200-C225. The Charge relay system role is filled by H65. N103 carries N-linked (GlcNAc...) asparagine glycosylation. Residue D110 is the Charge relay system of the active site. N-linked (GlcNAc...) asparagine glycans are attached at residues N121, N122, N154, and N170. S204 (charge relay system) is an active-site residue. Residue N251 is glycosylated (N-linked (GlcNAc...) asparagine).

It belongs to the peptidase S1 family. Snake venom subfamily. As to quaternary structure, monomer. Expressed by the venom gland.

Its subcellular location is the secreted. In terms of biological role, snake venom serine protease that may act in the hemostasis system of the prey. This chain is Snake venom serine protease KN12, found in Trimeresurus stejnegeri (Chinese green tree viper).